The chain runs to 341 residues: HTH-type transcriptional repressor PurR (341 aa).

One can recognise an HTH lacI-type domain in the interval alanine 2–valine 56. The H-T-H motif DNA-binding region spans isoleucine 4–asparagine 23. A DNA-binding region spans residues serine 48–valine 56. The hypoxanthine site is built by tyrosine 73, arginine 190, threonine 192, phenylalanine 221, and aspartate 275.

As to quaternary structure, homodimer.

It participates in purine metabolism; purine nucleotide biosynthesis [regulation]. Is the main repressor of the genes involved in the de novo synthesis of purine nucleotides, regulating purB, purC, purEK, purF, purHD, purL, purMN and guaBA expression. PurR is allosterically activated to bind its cognate DNA by binding the purine corepressors, hypoxanthine or guanine, thereby effecting transcription repression. The protein is HTH-type transcriptional repressor PurR of Klebsiella pneumoniae subsp. pneumoniae (strain ATCC 700721 / MGH 78578).